A 303-amino-acid polypeptide reads, in one-letter code: 4-sulfomuconolactone hydrolase (303 aa).

The protein belongs to the metallo-dependent hydrolases superfamily. Sulfomuconolactone hydrolase family. As to quaternary structure, monomer. Zn(2+) is required as a cofactor.

It carries out the reaction 4-sulfomuconolactone + H2O = maleylacetate + sulfite + 2 H(+). Its activity is regulated as follows. Completely inhibited by ZnCl(2) and CuCl(2). Functionally, involved in the degradation of 4-sulfocatechol which is a central intermediate in the degradation of substituted sulfonated benzenes. Catalyzes the hydrolytical desulfonation of 4-sulfomuconolactone to yield maleylacetate. The chain is 4-sulfomuconolactone hydrolase from Hydrogenophaga intermedia.